A 154-amino-acid polypeptide reads, in one-letter code: 17 kDa surface antigen (154 aa).

Positions 1-19 (MKLLSKIMVIALATSMLQA) are cleaved as a signal peptide. Cys-20 is lipidated: N-palmitoyl cysteine. A lipid anchor (S-diacylglycerol cysteine) is attached at Cys-20.

This sequence belongs to the rickettsiale 17 kDa surface antigen family.

It is found in the cell outer membrane. This Rickettsia parkeri protein is 17 kDa surface antigen (omp).